We begin with the raw amino-acid sequence, 194 residues long: Ras-related protein RabU (194 aa).

A GTP-binding site is contributed by 19 to 27; that stretch reads GYDYECGIK. Residues 42–50 carry the Effector region motif; sequence PESQVGVDF. GTP is bound by residues 68 to 72 and 130 to 133; these read PQNKY and NNSE.

Belongs to the small GTPase superfamily. Rab family.

The protein is Ras-related protein RabU (rabU) of Dictyostelium discoideum (Social amoeba).